A 233-amino-acid chain; its full sequence is Isoprenyl transferase (233 aa).

The active site involves Asp-12. Asp-12 contacts Mg(2+). Substrate-binding positions include 13 to 16 (GNGR), Trp-17, Arg-25, His-29, and 57 to 59 (STE). Residue Asn-60 is the Proton acceptor of the active site. Residues Trp-61, Arg-63, Arg-178, and 184–186 (RLS) each bind substrate. A Mg(2+)-binding site is contributed by Glu-197.

It belongs to the UPP synthase family. In terms of assembly, homodimer. The cofactor is Mg(2+).

Functionally, catalyzes the condensation of isopentenyl diphosphate (IPP) with allylic pyrophosphates generating different type of terpenoids. The chain is Isoprenyl transferase from Thermotoga maritima (strain ATCC 43589 / DSM 3109 / JCM 10099 / NBRC 100826 / MSB8).